Consider the following 654-residue polypeptide: Carboxypeptidase Z (654 aa).

The N-terminal stretch at Met-1–Ala-20 is a signal peptide. The region spanning Thr-43–Pro-165 is the FZ domain. 5 cysteine pairs are disulfide-bonded: Cys-48–Cys-114, Cys-56–Cys-107, Cys-98–Cys-134, Cys-123–Cys-162, and Cys-127–Cys-151. Asn-62 is a glycosylation site (N-linked (GlcNAc...) asparagine). Positions Ala-191–Val-507 constitute a Peptidase M14 domain. Zn(2+) contacts are provided by His-253 and Glu-256. Residue Asn-286 is glycosylated (N-linked (GlcNAc...) asparagine). His-385 is a binding site for Zn(2+). Residue Glu-477 is the Proton donor/acceptor of the active site. A disordered region spans residues Phe-596–Ser-630.

It belongs to the peptidase M14 family. Requires Zn(2+) as cofactor.

The protein resides in the secreted. The protein localises to the extracellular space. Its subcellular location is the extracellular matrix. Inhibited by 2-mercaptomethyl-3-guanidinoethylthiopropanoic acid (MGTA) and guanidinoethylmercaptosuccinic acid (GEMSA). Inhibited by chelating agents such as EDTA and EGTA. Functionally, cleaves substrates with C-terminal arginine residues. Probably modulates the Wnt signaling pathway, by cleaving some undefined protein. May play a role in cleavage during prohormone processing. The sequence is that of Carboxypeptidase Z (Cpz) from Mus musculus (Mouse).